The following is a 679-amino-acid chain: Methionine--tRNA ligase (679 aa).

The 'HIGH' region signature appears at 14 to 24 (PYANGSIHLGH). Residues Cys145, Cys148, Cys158, and Cys161 each coordinate Zn(2+). The 'KMSKS' region motif lies at 331 to 335 (KMSKS). Residue Lys334 participates in ATP binding. The region spanning 577–679 (TFAAVDLRVA…SGAKPGQRIK (103 aa)) is the tRNA-binding domain.

The protein belongs to the class-I aminoacyl-tRNA synthetase family. MetG type 1 subfamily. As to quaternary structure, homodimer. Zn(2+) is required as a cofactor.

It is found in the cytoplasm. The enzyme catalyses tRNA(Met) + L-methionine + ATP = L-methionyl-tRNA(Met) + AMP + diphosphate. Is required not only for elongation of protein synthesis but also for the initiation of all mRNA translation through initiator tRNA(fMet) aminoacylation. The polypeptide is Methionine--tRNA ligase (Pseudomonas putida (strain ATCC 700007 / DSM 6899 / JCM 31910 / BCRC 17059 / LMG 24140 / F1)).